Here is a 130-residue protein sequence, read N- to C-terminus: Small ribosomal subunit protein uS8 (130 aa).

This sequence belongs to the universal ribosomal protein uS8 family. In terms of assembly, component of the 40S ribosomal subunit. Part of the small subunit (SSU) processome, composed of more than 70 proteins and the RNA chaperone small nucleolar RNA (snoRNA) U3.

It localises to the cytoplasm. The protein resides in the nucleus. The protein localises to the nucleolus. Component of the small ribosomal subunit. Part of the small subunit (SSU) processome, first precursor of the small eukaryotic ribosomal subunit. During the assembly of the SSU processome in the nucleolus, many ribosome biogenesis factors, an RNA chaperone and ribosomal proteins associate with the nascent pre-rRNA and work in concert to generate RNA folding, modifications, rearrangements and cleavage as well as targeted degradation of pre-ribosomal RNA by the RNA exosome. Required for erythropoiesis during embryonic development. The polypeptide is Small ribosomal subunit protein uS8 (Danio rerio (Zebrafish)).